A 246-amino-acid polypeptide reads, in one-letter code: MKPSDVRSKAFAMPLTSPAFPMGPYRFVDREFLIITYRTDPDRLREIVPEPLQVTEPLVHYEFIRMADSTGFGDYTESGQVIPVEYNGQPGGYTLAMYLDDHPPIAGGRELWGFPKKLASPTLHVNTDHILGTLDYGKVRVATGTMGYKHKELDIDEQTKRLAGPNFLLKIIPHVDGTARVCELVRYYMQDIKMKGAWTGPASLELAPHALAPVADLPVLEIVEARHLVADLTLGLGEVVYDYLAQ.

K116 serves as the catalytic Schiff-base intermediate with acetoacetate.

The protein belongs to the ADC family.

The enzyme catalyses acetoacetate + H(+) = acetone + CO2. In terms of biological role, catalyzes the conversion of acetoacetate to acetone and carbon dioxide. This Burkholderia lata (strain ATCC 17760 / DSM 23089 / LMG 22485 / NCIMB 9086 / R18194 / 383) protein is Acetoacetate decarboxylase.